Consider the following 390-residue polypeptide: Transforming growth factor beta-1 proprotein (390 aa).

The first 29 residues, 1-29, serve as a signal peptide directing secretion; it reads MPPSGLRLLPLLLPLLWLLMLTPGRPVAG. The tract at residues 30–74 is straightjacket domain; sequence LSTCKTIDMELVKRKRIEAIRGQILSKLRLASPPSQGDVPPGPLP. Positions 75 to 271 are arm domain; it reads EAILALYNST…ATPLERAQHL (197 aa). Asparagine 82, asparagine 136, and asparagine 176 each carry an N-linked (GlcNAc...) asparagine glycan. The interval 226–252 is bowtie tail; it reads DSKDNTLQVDINGFSSGRRGDLATIHG. Positions 244–246 match the Cell attachment site motif; it reads RGD. 4 cysteine pairs are disulfide-bonded: cysteine 285–cysteine 294, cysteine 293–cysteine 356, cysteine 322–cysteine 387, and cysteine 326–cysteine 389.

The protein belongs to the TGF-beta family. In terms of assembly, homodimer; disulfide-linked. Interacts with the serine proteases, HTRA1 and HTRA3: the interaction with either inhibits TGFB1-mediated signaling and the HTRA protease activity is required for this inhibition. May interact with THSD4; this interaction may lead to sequestration by FBN1 microfibril assembly and attenuation of TGFB signaling. Interacts with CD109, DPT and ASPN. Interacts with EFEMP2. Interacts with TSKU; the interaction contributes to regulation of the hair cycle. Interacts with TGFBR3. Homodimer; disulfide-linked. Interacts with transforming growth factor beta-1 (TGF-beta-1) chain; interaction is non-covalent and maintains TGF-beta-1 in a latent state; each latency-associated peptide (LAP) monomer interacts with TGF-beta-1 in the other monomer. Interacts with LTBP1; leading to regulation of TGF-beta-1 activation. Interacts with LRRC32/GARP; leading to regulation of TGF-beta-1 activation on the surface of activated regulatory T-cells (Tregs). Interacts with LRRC33/NRROS; leading to regulation of TGF-beta-1 activation in macrophages and microglia. Interacts (via cell attachment site) with integrins ITGAV and ITGB6 (ITGAV:ITGB6), leading to release of the active TGF-beta-1. Interacts with NREP; the interaction results in a decrease in TGFB1 autoinduction. Interacts with HSP90AB1; inhibits latent TGFB1 activation. As to quaternary structure, homodimer; disulfide-linked. Interacts with TGF-beta receptors (TGFBR1 and TGFBR2), leading to signal transduction. Interacts with EFEMP2. In terms of processing, transforming growth factor beta-1 proprotein: The precursor proprotein is cleaved in the Golgi apparatus by FURIN to form Transforming growth factor beta-1 (TGF-beta-1) and Latency-associated peptide (LAP) chains, which remain non-covalently linked, rendering TGF-beta-1 inactive. N-glycosylated. Deglycosylation leads to activation of Transforming growth factor beta-1 (TGF-beta-1); mechanisms triggering deglycosylation-driven activation of TGF-beta-1 are however unclear.

It is found in the secreted. The protein resides in the extracellular space. Its subcellular location is the extracellular matrix. Transforming growth factor beta-1 proprotein: Precursor of the Latency-associated peptide (LAP) and Transforming growth factor beta-1 (TGF-beta-1) chains, which constitute the regulatory and active subunit of TGF-beta-1, respectively. Functionally, required to maintain the Transforming growth factor beta-1 (TGF-beta-1) chain in a latent state during storage in extracellular matrix. Associates non-covalently with TGF-beta-1 and regulates its activation via interaction with 'milieu molecules', such as LTBP1, LRRC32/GARP and LRRC33/NRROS, that control activation of TGF-beta-1. Interaction with LRRC33/NRROS regulates activation of TGF-beta-1 in macrophages and microglia. Interaction with LRRC32/GARP controls activation of TGF-beta-1 on the surface of activated regulatory T-cells (Tregs). Interaction with integrins (ITGAV:ITGB6 or ITGAV:ITGB8) results in distortion of the Latency-associated peptide chain and subsequent release of the active TGF-beta-1. Its function is as follows. Multifunctional protein that regulates the growth and differentiation of various cell types and is involved in various processes, such as normal development, immune function, microglia function and responses to neurodegeneration. Activation into mature form follows different steps: following cleavage of the proprotein in the Golgi apparatus, Latency-associated peptide (LAP) and Transforming growth factor beta-1 (TGF-beta-1) chains remain non-covalently linked rendering TGF-beta-1 inactive during storage in extracellular matrix. At the same time, LAP chain interacts with 'milieu molecules', such as LTBP1, LRRC32/GARP and LRRC33/NRROS that control activation of TGF-beta-1 and maintain it in a latent state during storage in extracellular milieus. TGF-beta-1 is released from LAP by integrins (ITGAV:ITGB6 or ITGAV:ITGB8): integrin-binding to LAP stabilizes an alternative conformation of the LAP bowtie tail and results in distortion of the LAP chain and subsequent release of the active TGF-beta-1. Once activated following release of LAP, TGF-beta-1 acts by binding to TGF-beta receptors (TGFBR1 and TGFBR2), which transduce signal. While expressed by many cells types, TGF-beta-1 only has a very localized range of action within cell environment thanks to fine regulation of its activation by Latency-associated peptide chain (LAP) and 'milieu molecules'. Plays an important role in bone remodeling: acts as a potent stimulator of osteoblastic bone formation, causing chemotaxis, proliferation and differentiation in committed osteoblasts. Can promote either T-helper 17 cells (Th17) or regulatory T-cells (Treg) lineage differentiation in a concentration-dependent manner. At high concentrations, leads to FOXP3-mediated suppression of RORC and down-regulation of IL-17 expression, favoring Treg cell development. At low concentrations in concert with IL-6 and IL-21, leads to expression of the IL-17 and IL-23 receptors, favoring differentiation to Th17 cells. Stimulates sustained production of collagen through the activation of CREB3L1 by regulated intramembrane proteolysis (RIP). Mediates SMAD2/3 activation by inducing its phosphorylation and subsequent translocation to the nucleus. Positively regulates odontoblastic differentiation in dental papilla cells, via promotion of IPO7-mediated translocation of phosphorylated SMAD2 to the nucleus and subsequent transcription of target genes. Can induce epithelial-to-mesenchymal transition (EMT) and cell migration in various cell types. The protein is Transforming growth factor beta-1 proprotein (TGFB1) of Bos taurus (Bovine).